The primary structure comprises 889 residues: 97 kDa heat shock protein (889 aa).

2 disordered regions span residues 504–622 (EDAM…ATTD) and 812–889 (FVCD…MELD). A compositionally biased stretch (basic and acidic residues) spans 549–585 (SADKEEQADNGSKETSKDSKDQTSESSKSDKESKDQN). The segment covering 586 to 597 (SEGSKSDNSSTE) has biased composition (polar residues). The segment covering 869–889 (ASKEGETKPDETKPDVEMELD) has biased composition (basic and acidic residues).

The protein belongs to the heat shock protein 70 family.

Its function is as follows. Cell surface recognition protein that binds acrosome-reacted sperm and thereby mediates binding and subsequent fusion of the sperm and egg. This is 97 kDa heat shock protein from Strongylocentrotus purpuratus (Purple sea urchin).